The sequence spans 794 residues: Phenylalanine--tRNA ligase beta subunit (794 aa).

In terms of domain architecture, tRNA-binding spans 39–154 (SSSFSSIITA…ANTPLGESAC (116 aa)). Residues 403–481 (PPSPTLTLRT…QPWKIEKKKA (79 aa)) enclose the B5 domain. 4 residues coordinate Mg(2+): D457, D463, E466, and E467. The region spanning 697 to 793 (PIYPSSFRDI…QLDDTKGTID (97 aa)) is the FDX-ACB domain.

Belongs to the phenylalanyl-tRNA synthetase beta subunit family. Type 1 subfamily. In terms of assembly, tetramer of two alpha and two beta subunits. Requires Mg(2+) as cofactor.

The protein resides in the cytoplasm. It catalyses the reaction tRNA(Phe) + L-phenylalanine + ATP = L-phenylalanyl-tRNA(Phe) + AMP + diphosphate + H(+). The protein is Phenylalanine--tRNA ligase beta subunit of Chlamydia abortus (strain DSM 27085 / S26/3) (Chlamydophila abortus).